The following is a 451-amino-acid chain: Probable D-serine dehydratase (451 aa).

The residue at position 119 (lysine 119) is an N6-(pyridoxal phosphate)lysine.

It belongs to the serine/threonine dehydratase family. DsdA subfamily. It depends on pyridoxal 5'-phosphate as a cofactor.

It carries out the reaction D-serine = pyruvate + NH4(+). The sequence is that of Probable D-serine dehydratase from Acidovorax ebreus (strain TPSY) (Diaphorobacter sp. (strain TPSY)).